Reading from the N-terminus, the 110-residue chain is Movement protein TGB2 (110 aa).

At 1–10 the chain is on the cytoplasmic side; sequence MSGAHHLTPP. Residues 11–34 form a helical membrane-spanning segment; that stretch reads TDYGKPVLAASIGISLALLVYTAT. The Lumenal portion of the chain corresponds to 35-76; that stretch reads RSTLPHVGDNLHALPHGGRYVDGTKSISYFSPSASKTRDPFP. A helical membrane pass occupies residues 77-92; the sequence is FAFLLILTLSGLILLL. Topologically, residues 93–110 are cytoplasmic; that stretch reads SRRRSNPHSCPSCGTPHA.

Belongs to the Tymovirales TGBp2 protein family.

It is found in the host endoplasmic reticulum membrane. Functionally, plays a role in viral cell-to-cell propagation, by facilitating genome transport to neighboring plant cells through plasmosdesmata,. This chain is Movement protein TGB2, found in Plantago asiatica (P1AMV).